The following is a 771-amino-acid chain: U3 small nucleolar RNA-associated protein 14 homolog A (771 aa).

Residues proline 23 to alanine 49 are disordered. 5 positions are modified to phosphoserine: serine 29, serine 31, serine 52, serine 77, and serine 81. Residues glutamate 40–alanine 67 are a coiled coil. Residue lysine 122 forms a Glycyl lysine isopeptide (Lys-Gly) (interchain with G-Cter in SUMO2) linkage. The residue at position 205 (threonine 205) is a Phosphothreonine. Coiled-coil stretches lie at residues serine 216–arginine 290 and leucine 317–glutamate 347. 2 disordered regions span residues threonine 334 to glutamate 355 and methionine 367 to glutamine 557. Acidic residues predominate over residues glutamate 342–glutamate 355. Basic and acidic residues predominate over residues leucine 399 to leucine 436. 2 positions are modified to phosphoserine: serine 405 and serine 407. Arginine 433 is modified (citrulline). 2 positions are modified to phosphoserine: serine 437 and serine 445. Lysine 449 is covalently cross-linked (Glycyl lysine isopeptide (Lys-Gly) (interchain with G-Cter in SUMO2)). The residue at position 453 (serine 453) is a Phosphoserine. Basic and acidic residues predominate over residues arginine 504–proline 529. Lysine 519 is covalently cross-linked (Glycyl lysine isopeptide (Lys-Gly) (interchain with G-Cter in SUMO2)). The span at glycine 535 to asparagine 544 shows a compositional bias: polar residues. A compositionally biased stretch (basic and acidic residues) spans aspartate 547–glutamine 557. Serine 569 is subject to Phosphoserine. Arginine 589 is modified (citrulline). Lysine 733 is covalently cross-linked (Glycyl lysine isopeptide (Lys-Gly) (interchain with G-Cter in SUMO2)). The segment covering arginine 740 to glutamine 751 has biased composition (polar residues). The tract at residues arginine 740–aspartate 771 is disordered. Over residues asparagine 753–aspartate 771 the composition is skewed to basic residues.

This sequence belongs to the UTP14 family. As to quaternary structure, interacts with DHX37. Citrullinated by PADI4. In terms of tissue distribution, ubiquitously expressed.

The protein localises to the nucleus. It is found in the nucleolus. Functionally, may be required for ribosome biogenesis. This is U3 small nucleolar RNA-associated protein 14 homolog A (UTP14A) from Homo sapiens (Human).